Here is a 434-residue protein sequence, read N- to C-terminus: MSIDIDWERATSGPDGELLAERIRSFIHDKFQQIVLPRFIRSVQVTSFNFGTIPPELEIRDLCDPFPDFYEEDDNENFSESSEEQSPTREPVDRYGSKVESWQANSPGSLEDHMQGRMGFNGPLRMPPGEENTGISPLRSPMNFGDINPYLFPRSRTPGIPGGTSNLGYYMPLSGLSGSQTPLGTVARGSPFSGGWPDVHGARPSRRRSEVEPDSAQSRPSTANTGNTLLSRGSMSSGDPRHSHHSQGVPGSDHGQVLEPNMPPTSSDAPLDDLPPRRMREQKAEDFQVFCRTKYAGNISLSLTAEILLDYPMPSFVGLPLKLNITGLTFDAVAVIAYIRRRIHFCFLSPEDADALIGPEIGSGGGEDTLEPNSPRRKPLSLLREIRVESEIGRKENGKQALKNVGKVEKFVLEQVRRIFEEEFVYPSFWTFLV.

One can recognise an SMP-LTD domain in the interval Met-1–Val-434. Residues Tyr-70–Glu-83 are compositionally biased toward acidic residues. 2 disordered regions span residues Tyr-70–Pro-141 and Thr-181–Pro-275. A compositionally biased stretch (basic and acidic residues) spans Ser-86–Ser-97. Residues Ser-215 to Ser-237 show a composition bias toward polar residues.

The protein belongs to the MDM12 family. In terms of assembly, component of the ER-mitochondria encounter structure (ERMES) or MDM complex, composed of MMM1, MDM10, MDM12 and MDM34. An MMM1 homodimer associates with one molecule of MDM12 on each side in a pairwise head-to-tail manner, and the SMP-LTD domains of MMM1 and MDM12 generate a continuous hydrophobic tunnel for phospholipid trafficking.

The protein localises to the mitochondrion outer membrane. It is found in the endoplasmic reticulum membrane. Functionally, component of the ERMES/MDM complex, which serves as a molecular tether to connect the endoplasmic reticulum (ER) and mitochondria. Components of this complex are involved in the control of mitochondrial shape and protein biogenesis, and function in nonvesicular lipid trafficking between the ER and mitochondria. MDM12 is required for the interaction of the ER-resident membrane protein MMM1 and the outer mitochondrial membrane-resident beta-barrel protein MDM10. The MDM12-MMM1 subcomplex functions in the major beta-barrel assembly pathway that is responsible for biogenesis of all mitochondrial outer membrane beta-barrel proteins, and acts in a late step after the SAM complex. The MDM10-MDM12-MMM1 subcomplex further acts in the TOM40-specific pathway after the action of the MDM12-MMM1 complex. Essential for establishing and maintaining the structure of mitochondria and maintenance of mtDNA nucleoids. In Blastomyces gilchristii (strain SLH14081) (Blastomyces dermatitidis), this protein is Mitochondrial distribution and morphology protein 12.